A 356-amino-acid polypeptide reads, in one-letter code: sn-glycerol-3-phosphate import ATP-binding protein UgpC (356 aa).

The ABC transporter domain maps to 4-235; sequence LKLQAVTKSW…PASRFVASFI (232 aa). 37–44 is a binding site for ATP; the sequence is GPSGCGKS.

Belongs to the ABC transporter superfamily. sn-glycerol-3-phosphate importer (TC 3.A.1.1.3) family. As to quaternary structure, the complex is composed of two ATP-binding proteins (UgpC), two transmembrane proteins (UgpA and UgpE) and a solute-binding protein (UgpB).

The protein localises to the cell inner membrane. The enzyme catalyses sn-glycerol 3-phosphate(out) + ATP + H2O = sn-glycerol 3-phosphate(in) + ADP + phosphate + H(+). In terms of biological role, part of the ABC transporter complex UgpBAEC involved in sn-glycerol-3-phosphate (G3P) import. Responsible for energy coupling to the transport system. This chain is sn-glycerol-3-phosphate import ATP-binding protein UgpC, found in Salmonella typhi.